A 105-amino-acid chain; its full sequence is Small ribosomal subunit protein uS10 (105 aa).

The protein belongs to the universal ribosomal protein uS10 family. In terms of assembly, part of the 30S ribosomal subunit.

In terms of biological role, involved in the binding of tRNA to the ribosomes. The protein is Small ribosomal subunit protein uS10 of Gloeothece citriformis (strain PCC 7424) (Cyanothece sp. (strain PCC 7424)).